The following is a 513-amino-acid chain: Histidine ammonia-lyase (513 aa).

A cross-link (5-imidazolinone (Ala-Gly)) is located at residues Ala145–Gly147. 2,3-didehydroalanine (Ser) is present on Ser146.

It belongs to the PAL/histidase family. Post-translationally, contains an active site 4-methylidene-imidazol-5-one (MIO), which is formed autocatalytically by cyclization and dehydration of residues Ala-Ser-Gly.

Its subcellular location is the cytoplasm. It catalyses the reaction L-histidine = trans-urocanate + NH4(+). Its pathway is amino-acid degradation; L-histidine degradation into L-glutamate; N-formimidoyl-L-glutamate from L-histidine: step 1/3. The chain is Histidine ammonia-lyase from Vibrio vulnificus (strain YJ016).